Here is a 142-residue protein sequence, read N- to C-terminus: Hemoglobin subunit alpha (142 aa).

The Globin domain occupies 2–142 (VLSPADKTNV…VSTVLVSKYR (141 aa)). Ser4 bears the Phosphoserine mark. Position 8 is an N6-succinyllysine (Lys8). Thr9 carries the phosphothreonine modification. Lys12 is modified (N6-succinyllysine). Lys17 bears the N6-acetyllysine; alternate mark. Position 17 is an N6-succinyllysine; alternate (Lys17). Tyr25 carries the phosphotyrosine modification. At Ser36 the chain carries Phosphoserine. The residue at position 41 (Lys41) is an N6-succinyllysine. Residue Ser50 is modified to Phosphoserine. His59 contacts O2. His88 contributes to the heme b binding site. Residue Ser103 is modified to Phosphoserine. At Thr109 the chain carries Phosphothreonine. Residues Ser125 and Ser132 each carry the phosphoserine modification. Thr135 is subject to Phosphothreonine. Ser139 carries the post-translational modification Phosphoserine.

The protein belongs to the globin family. Heterotetramer of two alpha chains and two beta chains. As to expression, red blood cells.

Functionally, involved in oxygen transport from the lung to the various peripheral tissues. Hemopressin acts as an antagonist peptide of the cannabinoid receptor CNR1. Hemopressin-binding efficiently blocks cannabinoid receptor CNR1 and subsequent signaling. The chain is Hemoglobin subunit alpha (HBA) from Antrozous pallidus (Pallid bat).